A 399-amino-acid polypeptide reads, in one-letter code: Chorismate synthase (399 aa).

Residues 41-72 (IQKDLDRRKPGQSMITTSRGEPDKVTINSGIQ) are disordered. Position 48 (Arg48) interacts with NADP(+). Residues 125-127 (RSS), Gly288, 303-307 (HAPVS), and Arg330 contribute to the FMN site. Composition is skewed to basic and acidic residues over residues 363 to 377 (PDRLDGRPGEYDTDY) and 389 to 399 (ADTHAKTIDDD). A disordered region spans residues 363-399 (PDRLDGRPGEYDTDYHPSSPQNDPEDADTHAKTIDDD).

Belongs to the chorismate synthase family. Requires FMNH2 as cofactor.

The enzyme catalyses 5-O-(1-carboxyvinyl)-3-phosphoshikimate = chorismate + phosphate. It participates in metabolic intermediate biosynthesis; chorismate biosynthesis; chorismate from D-erythrose 4-phosphate and phosphoenolpyruvate: step 7/7. Catalyzes the anti-1,4-elimination of the C-3 phosphate and the C-6 proR hydrogen from 5-enolpyruvylshikimate-3-phosphate (EPSP) to yield chorismate, which is the branch point compound that serves as the starting substrate for the three terminal pathways of aromatic amino acid biosynthesis. This reaction introduces a second double bond into the aromatic ring system. This Haloarcula marismortui (strain ATCC 43049 / DSM 3752 / JCM 8966 / VKM B-1809) (Halobacterium marismortui) protein is Chorismate synthase.